The chain runs to 70 residues: Consomatin Mrc3 (70 aa).

Positions 1 to 22 (MQTAYWVMVMMMVWITAPLSEG) are cleaved as a signal peptide. The propeptide occupies 23–55 (GKLNDVIRGLVPDDVTPKRILQSLISRRRFDGR). A disulfide bridge connects residues Cys-62 and Cys-67. A D-tryptophan modification is found at Trp-64. The residue at position 68 (Pro-68) is a 4-hydroxyproline. Residue Tyr-69 is modified to Tyrosine amide.

The protein belongs to the conotoxin C superfamily. Consomatin family. As to expression, expressed by the venom duct.

The protein localises to the secreted. Moderately activates human somatostatin receptors (SSTR) with a preferential activation of SSTR1 and SSTR4. In vivo, does not cause behavioral changes in mice within a few minutes of intracranial injection, but causes a progressive loss of movement thereafter. Four to five hours after injection, mice recover, even with the highest dose tested. Shows antinociception and antihyperalgesia activities in two mouse models of acute pain, most probably by acting outside the central nervous system. In Conus mercator (Trader cone), this protein is Consomatin Mrc3.